The chain runs to 117 residues: Large ribosomal subunit protein uL18 (117 aa).

The protein belongs to the universal ribosomal protein uL18 family. Part of the 50S ribosomal subunit; part of the 5S rRNA/L5/L18/L25 subcomplex. Contacts the 5S and 23S rRNAs.

Its function is as follows. This is one of the proteins that bind and probably mediate the attachment of the 5S RNA into the large ribosomal subunit, where it forms part of the central protuberance. This chain is Large ribosomal subunit protein uL18, found in Azoarcus sp. (strain BH72).